The primary structure comprises 106 residues: 3-phenylpropionate/cinnamic acid dioxygenase ferredoxin subunit (106 aa).

The region spanning isoleucine 4–isoleucine 99 is the Rieske domain. Residues cysteine 42, histidine 44, cysteine 62, and histidine 65 each contribute to the [2Fe-2S] cluster site.

This sequence belongs to the bacterial ring-hydroxylating dioxygenase ferredoxin component family. In terms of assembly, this dioxygenase system consists of four proteins: the two subunits of the hydroxylase component (HcaE and HcaF), a ferredoxin (HcaC) and a ferredoxin reductase (HcaD). [2Fe-2S] cluster serves as cofactor.

The protein operates within aromatic compound metabolism; 3-phenylpropanoate degradation. Its function is as follows. Part of the multicomponent 3-phenylpropionate dioxygenase, that converts 3-phenylpropionic acid (PP) and cinnamic acid (CI) into 3-phenylpropionate-dihydrodiol (PP-dihydrodiol) and cinnamic acid-dihydrodiol (CI-dihydrodiol), respectively. This protein seems to be a 2Fe-2S ferredoxin. In Shigella boydii serotype 4 (strain Sb227), this protein is 3-phenylpropionate/cinnamic acid dioxygenase ferredoxin subunit.